The chain runs to 281 residues: Diphthine methyl ester synthase (281 aa).

S-adenosyl-L-methionine is bound by residues leucine 9, aspartate 84, glycine 87, 112-113 (SI), and leucine 163. The residue at position 171 (serine 171) is a Phosphoserine. The S-adenosyl-L-methionine site is built by valine 225 and histidine 250.

Belongs to the diphthine synthase family.

It carries out the reaction 2-[(3S)-amino-3-carboxypropyl]-L-histidyl-[translation elongation factor 2] + 4 S-adenosyl-L-methionine = diphthine methyl ester-[translation elongation factor 2] + 4 S-adenosyl-L-homocysteine + 3 H(+). It functions in the pathway protein modification; peptidyl-diphthamide biosynthesis. In terms of biological role, S-adenosyl-L-methionine-dependent methyltransferase that catalyzes four methylations of the modified target histidine residue in translation elongation factor 2 (EF-2), to form an intermediate called diphthine methyl ester. The four successive methylation reactions represent the second step of diphthamide biosynthesis. This chain is Diphthine methyl ester synthase (Dph5), found in Mus musculus (Mouse).